The following is a 294-amino-acid chain: MALSLDDLPEKPAPAEPVSAPVGRRVQASLVFARGGGTTVLSRQVVPYPFHITRAFRMHPESPDLATLYLQSASGGLYAADHLTLDIAARPGARVHVTTQAGTVVHRGGPEPTRQDTRLAIAADAFLALNPDPLILFPGAHLAVSTDITAEPGARAIVTESVACHDPLGQDRPFDRLDLGLTIRTPEGRALVRERSRIDGAAFVGPDSPMGGHRAYGTMVVLGAPEDARLAGPLLRQASDTAGCLTGVSVLPNGAGLGLRLLAPDGGTLSAGMEAVFRIVFEALSGCGPGRRRK.

Residues 1–20 form a disordered region; that stretch reads MALSLDDLPEKPAPAEPVSA.

It belongs to the UreD family. As to quaternary structure, ureD, UreF and UreG form a complex that acts as a GTP-hydrolysis-dependent molecular chaperone, activating the urease apoprotein by helping to assemble the nickel containing metallocenter of UreC. The UreE protein probably delivers the nickel.

It is found in the cytoplasm. Required for maturation of urease via the functional incorporation of the urease nickel metallocenter. In Methylorubrum populi (strain ATCC BAA-705 / NCIMB 13946 / BJ001) (Methylobacterium populi), this protein is Urease accessory protein UreD 1.